Consider the following 96-residue polypeptide: Large ribosomal subunit protein bL28 (96 aa).

Belongs to the bacterial ribosomal protein bL28 family.

This is Large ribosomal subunit protein bL28 from Leptospira biflexa serovar Patoc (strain Patoc 1 / Ames).